A 230-amino-acid polypeptide reads, in one-letter code: Transcription factor bHLH147 (230 aa).

Polar residues predominate over residues 1–17; that stretch reads MESISPVSNQLLQPTTT. The interval 1–52 is disordered; that stretch reads MESISPVSNQLLQPTTTSSNSDRSRRKRKKKSSPSSVEKSPSPSISLEKWRS. Over residues 33-46 the composition is skewed to low complexity; it reads SPSSVEKSPSPSIS. Positions 147–196 constitute a bHLH domain; the sequence is KQRATVLRLKAKGLPAVQRKVKVLSRLVPGCRKQSLPVVLEETTDYIAAM. Positions 210 to 230 are disordered; the sequence is VSSSPPPPTPGHEGGQTHMLG.

In terms of assembly, homodimer. Interacts with PRE3.

The protein resides in the nucleus. Functionally, atypical bHLH transcription factor probably unable to bind DNA. Negatively regulates brassinosteroid signaling. This is Transcription factor bHLH147 (BHLH147) from Arabidopsis thaliana (Mouse-ear cress).